The primary structure comprises 76 residues: Large ribosomal subunit protein bL31 (76 aa).

The protein belongs to the bacterial ribosomal protein bL31 family. Type A subfamily. In terms of assembly, part of the 50S ribosomal subunit.

In terms of biological role, binds the 23S rRNA. This chain is Large ribosomal subunit protein bL31, found in Methylocella silvestris (strain DSM 15510 / CIP 108128 / LMG 27833 / NCIMB 13906 / BL2).